A 177-amino-acid polypeptide reads, in one-letter code: Transcription factor E (177 aa).

The region spanning 9-91 (VEELLNELVG…YWRINYDKAL (83 aa)) is the HTH TFE/IIEalpha-type domain.

The protein belongs to the TFE family. Monomer. Interaction with RNA polymerase subunits RpoF and RpoE is necessary for Tfe stimulatory transcription activity. Able to interact with Tbp and RNA polymerase in the absence of DNA promoter. Interacts both with the preinitiation and elongation complexes.

In terms of biological role, transcription factor that plays a role in the activation of archaeal genes transcribed by RNA polymerase. Facilitates transcription initiation by enhancing TATA-box recognition by TATA-box-binding protein (Tbp), and transcription factor B (Tfb) and RNA polymerase recruitment. Not absolutely required for transcription in vitro, but particularly important in cases where Tbp or Tfb function is not optimal. It dynamically alters the nucleic acid-binding properties of RNA polymerases by stabilizing the initiation complex and destabilizing elongation complexes. Seems to translocate with the RNA polymerase following initiation and acts by binding to the non template strand of the transcription bubble in elongation complexes. The sequence is that of Transcription factor E from Archaeoglobus fulgidus (strain ATCC 49558 / DSM 4304 / JCM 9628 / NBRC 100126 / VC-16).